The chain runs to 180 residues: MVPRLQEKYEKEVIPALIEKFGYKNIMEVPKLEKIVINMGVGEAKENQKMLESAVSDLSIIAGQKPIVTKAKKSVANFKIRENMPIGCKVTLRKVKMYEFADKLMNVALPRVRDFRGVSSKSFDGRGNYSLGVKEQLMFPEIEYDKVDKVRGMDIIFVTTAKTDEEARELLRFLGMPFAH.

This sequence belongs to the universal ribosomal protein uL5 family. As to quaternary structure, part of the 50S ribosomal subunit; part of the 5S rRNA/L5/L18/L25 subcomplex. Contacts the 5S rRNA and the P site tRNA. Forms a bridge to the 30S subunit in the 70S ribosome.

Functionally, this is one of the proteins that bind and probably mediate the attachment of the 5S RNA into the large ribosomal subunit, where it forms part of the central protuberance. In the 70S ribosome it contacts protein S13 of the 30S subunit (bridge B1b), connecting the 2 subunits; this bridge is implicated in subunit movement. Contacts the P site tRNA; the 5S rRNA and some of its associated proteins might help stabilize positioning of ribosome-bound tRNAs. This chain is Large ribosomal subunit protein uL5, found in Clostridium tetani (strain Massachusetts / E88).